Reading from the N-terminus, the 272-residue chain is Dermonecrotic toxin LvSicTox-alphaIC1biv (272 aa).

His5 is a catalytic residue. Mg(2+) contacts are provided by Glu25 and Asp27. The active-site Nucleophile is His41. Intrachain disulfides connect Cys45-Cys51 and Cys47-Cys189. Asp84 provides a ligand contact to Mg(2+).

This sequence belongs to the arthropod phospholipase D family. Class II subfamily. Mg(2+) is required as a cofactor. Expressed by the venom gland.

The protein localises to the secreted. It catalyses the reaction an N-(acyl)-sphingosylphosphocholine = an N-(acyl)-sphingosyl-1,3-cyclic phosphate + choline. The enzyme catalyses an N-(acyl)-sphingosylphosphoethanolamine = an N-(acyl)-sphingosyl-1,3-cyclic phosphate + ethanolamine. It carries out the reaction a 1-acyl-sn-glycero-3-phosphocholine = a 1-acyl-sn-glycero-2,3-cyclic phosphate + choline. The catalysed reaction is a 1-acyl-sn-glycero-3-phosphoethanolamine = a 1-acyl-sn-glycero-2,3-cyclic phosphate + ethanolamine. Dermonecrotic toxins cleave the phosphodiester linkage between the phosphate and headgroup of certain phospholipids (sphingolipid and lysolipid substrates), forming an alcohol (often choline) and a cyclic phosphate. This toxin acts on sphingomyelin (SM). It may also act on ceramide phosphoethanolamine (CPE), lysophosphatidylcholine (LPC) and lysophosphatidylethanolamine (LPE), but not on lysophosphatidylserine (LPS), and lysophosphatidylglycerol (LPG). It acts by transphosphatidylation, releasing exclusively cyclic phosphate products as second products. Induces dermonecrosis, hemolysis, increased vascular permeability, edema, inflammatory response, and platelet aggregation. This chain is Dermonecrotic toxin LvSicTox-alphaIC1biv, found in Loxosceles variegata (Recluse spider).